The chain runs to 300 residues: Protoheme IX farnesyltransferase (300 aa).

Helical transmembrane passes span 26-46 (VVQLIVFCALIGMVLAVPGLP), 54-74 (IAWACAGVWLVAGAAAAFNCI), 102-122 (LLFSALLCVAGSALLYFLVNP), 123-143 (LTMWLTFATFVGYAVIYTLIL), 150-170 (NIVIGGASGAMPPVLGWAAMT), 177-197 (ALILFLIIFLWTPPHFWALAL), 224-244 (VLLYTLILFAACLMPFIYGMS), 246-266 (WPYLAAAVLLGAGFCGYGFAL), and 279-299 (FRFSLIHLSALFAALLLDHYL).

Belongs to the UbiA prenyltransferase family. Protoheme IX farnesyltransferase subfamily.

It localises to the cell inner membrane. It carries out the reaction heme b + (2E,6E)-farnesyl diphosphate + H2O = Fe(II)-heme o + diphosphate. Its pathway is porphyrin-containing compound metabolism; heme O biosynthesis; heme O from protoheme: step 1/1. Functionally, converts heme B (protoheme IX) to heme O by substitution of the vinyl group on carbon 2 of heme B porphyrin ring with a hydroxyethyl farnesyl side group. The sequence is that of Protoheme IX farnesyltransferase from Verminephrobacter eiseniae (strain EF01-2).